The chain runs to 8922 residues: Protein clarinet (8922 aa).

Residues S11–S35 form a disordered region. The segment covering V19–Q28 has biased composition (acidic residues). Residues K385–E405 are a coiled coil. Disordered stretches follow at residues Q527–L579, I622–L673, L687–E860, S880–L955, E971–L1049, S1062–R1139, I1151–L1331, E1347–S1420, S1444–T1520, S1538–D1619, S1632–E1710, S1726–L1801, S1820–E1898, V1939–E1992, I2032–T2084, I2126–P2175, Q2194–L2213, I2220–D2246, S2329–E2403, S2423–L2497, S2516–E2594, S2610–E2684, S2704–F2845, S2892–K2963, E2983–L3155, E3171–L3249, S3268–L3337, S3619–D3639, A3995–I4079, I4117–T4169, S4181–I4271, Q4557–E4624, E4636–L4656, S4666–S4685, E4730–Q4801, P4855–D4899, P5004–T5036, L5360–S5379, R5390–L5413, K5484–V5511, P5540–G5572, A6194–S6303, D6354–M6437, S6487–I6510, A6577–L6609, N6668–R6691, A6728–G6768, T6998–S7018, A7045–D7098, F7137–P7175, E7202–R7263, K7313–E7350, D7598–M7623, T7760–T7797, and H7842–V7881. Residues S531–D552 show a composition bias toward basic and acidic residues. Basic and acidic residues predominate over residues M760–A776. A compositionally biased stretch (low complexity) spans S1062–P1076. The segment covering M1230 to H1244 has biased composition (basic and acidic residues). The span at I1251 to S1261 shows a compositional bias: polar residues. Basic and acidic residues-rich tracts occupy residues M1606–D1619 and M1700–E1710. Composition is skewed to basic and acidic residues over residues M1888–E1898 and M1982–E1992. Over residues Q2194–T2204 the composition is skewed to polar residues. Positions M2584 to E2594 are enriched in basic and acidic residues. Over residues M2772–A2788 the composition is skewed to basic and acidic residues. The segment covering L2793–S2803 has biased composition (polar residues). A compositionally biased stretch (polar residues) spans A3076–S3085. Polar residues predominate over residues G4035–T4044. Residues P4065–I4079 are compositionally biased toward basic and acidic residues. Polar residues-rich tracts occupy residues L4182 to P4195, S4223 to F4234, and M4255 to I4271. Residues I4571 to S4580 show a composition bias toward basic and acidic residues. The span at N4581–Q4594 shows a compositional bias: polar residues. The span at M4613 to E4624 shows a compositional bias: basic and acidic residues. The segment covering E4636 to T4645 has biased composition (polar residues). Polar residues predominate over residues E4730–T4739. Residues E4871–S4890 are compositionally biased toward low complexity. Over residues E5009 to T5023 the composition is skewed to polar residues. The span at R5390 to R5407 shows a compositional bias: low complexity. Residues Q5486–S5499 show a composition bias toward polar residues. A compositionally biased stretch (pro residues) spans P5540–P5550. The span at R5560–G5572 shows a compositional bias: low complexity. Polar residues-rich tracts occupy residues A6225–F6245 and K6270–R6284. 2 stretches are compositionally biased toward basic and acidic residues: residues K6285–S6303 and G6376–L6422. Over residues L6494–S6505 the composition is skewed to polar residues. The segment covering S6590–S6600 has biased composition (low complexity). The segment covering E6670–P6687 has biased composition (polar residues). Low complexity predominate over residues S6735–S6747. Basic and acidic residues-rich tracts occupy residues T6998–T7008 and A7045–E7069. Positions S7071–T7086 are enriched in low complexity. Residues T7155–P7175 show a composition bias toward basic and acidic residues. Residues S7248 to Y7260 show a composition bias toward acidic residues. The segment covering K7313–P7331 has biased composition (low complexity). Residues S7599–N7609 are compositionally biased toward basic and acidic residues. 2 stretches are compositionally biased toward low complexity: residues S7777–S7788 and A7854–S7880. The stretch at K7895–E7915 forms a coiled coil. A disordered region spans residues S8510–E8562. Composition is skewed to polar residues over residues T8517 to R8530 and S8541 to M8551. The segment covering P8552–E8562 has biased composition (basic and acidic residues). Residues R8570–K8661 form the PDZ domain. Residues C8714–Y8835 enclose the C2 domain.

Expressed in the nervous system.

Its subcellular location is the synapse. It is found in the cell projection. It localises to the axon. Its function is as follows. Required for synapse development in the active zone of presynaptic terminals of specific neurons including serotonergic NSM neurons. The active zone is a protein-dense neuronal region within the presynaptic bouton, from which synaptic vesicles send neurotransmitter signals across the synapse. Plays a role in the recruitment and clustering of synaptic vesicles in the active zone of presynaptic terminals in serotonergic NSM neurons, and coordinates the release of synaptic vesicles at presynaptic terminals to regulate neurotransmission at neuromuscular junctions. Regulates synapse number in inhibitory motor neurons and plays a role in spontaneous postsynaptic synaptic vesicle release in muscle cells. The protein is Protein clarinet of Caenorhabditis elegans.